The primary structure comprises 329 residues: GDP-mannose transporter (329 aa).

Over 1–13 the chain is Cytoplasmic; the sequence is MSELKVDTGRLSH. The chain crosses the membrane as a helical span at residues 14-34; the sequence is IANSGPMSILAYCASSILMTV. Residues 35 to 44 lie on the Lumenal side of the membrane; the sequence is TNKCVVGSDK. Residues 45 to 65 traverse the membrane as a helical segment; sequence FNMLFVMLFAQSLVCVTALVL. The Cytoplasmic segment spans residues 66-79; it reads LKALGYVQYRPLNK. A helical membrane pass occupies residues 80–100; that stretch reads VDVKNWLLISVLLVLMTYTSS. The Lumenal segment spans residues 101 to 109; the sequence is RALKYLAVP. The helical transmembrane segment at 110 to 130 threads the bilayer; the sequence is IYTIFKNLTIILIAYGEVLFF. At 131–133 the chain is on the cytoplasmic side; it reads GGR. Residues 134–154 traverse the membrane as a helical segment; it reads VTAMELSSFLLIVLSSVVATL. The Lumenal segment spans residues 155-174; it reads GDQQALAKKPLAAAVESILG. The helical transmembrane segment at 175-195 threads the bilayer; it reads LNVGYFWMFTNCICSALFVLI. The Cytoplasmic segment spans residues 196–214; it reads MRKRIALTKFKDFDTMFYN. Residues 215–235 traverse the membrane as a helical segment; it reads NILSLPLLMLASFMFEDWGAA. The Lumenal portion of the chain corresponds to 236 to 245; the sequence is NIARNLTKDY. Asn240 carries an N-linked (GlcNAc...) asparagine glycan. A helical transmembrane segment spans residues 246–266; the sequence is IIIMIISGLASVGISYCSGWC. The Cytoplasmic portion of the chain corresponds to 267 to 273; that stretch reads VRVTSST. A helical membrane pass occupies residues 274 to 294; that stretch reads TYSMVGALNKLPIALSGLLFF. The Lumenal portion of the chain corresponds to 295-298; the sequence is DAPK. The chain crosses the membrane as a helical span at residues 299 to 319; that stretch reads NFLSIFSIFLGFLSGIVYAVA. The Cytoplasmic segment spans residues 320 to 329; the sequence is KQKKQSQPAN.

The protein belongs to the TPT transporter family. SLC35D subfamily. As to quaternary structure, homooligomer.

It is found in the golgi apparatus membrane. The protein resides in the cytoplasmic vesicle membrane. It localises to the endoplasmic reticulum membrane. Involved in the import of GDP-mannose from the cytoplasm into the Golgi lumen. In Eremothecium gossypii (strain ATCC 10895 / CBS 109.51 / FGSC 9923 / NRRL Y-1056) (Yeast), this protein is GDP-mannose transporter (VRG4).